Here is a 240-residue protein sequence, read N- to C-terminus: Ribonuclease HII (240 aa).

Positions 27–226 constitute an RNase H type-2 domain; it reads GPVAGVDEAG…REARSLRLED (200 aa). A divalent metal cation-binding residues include Asp33, Glu34, and Asp127.

Belongs to the RNase HII family. It depends on Mn(2+) as a cofactor. Mg(2+) is required as a cofactor.

It localises to the cytoplasm. It carries out the reaction Endonucleolytic cleavage to 5'-phosphomonoester.. Functionally, endonuclease that specifically degrades the RNA of RNA-DNA hybrids. The chain is Ribonuclease HII from Frankia casuarinae (strain DSM 45818 / CECT 9043 / HFP020203 / CcI3).